A 230-amino-acid polypeptide reads, in one-letter code: Ribonuclease 3 (230 aa).

The 121-residue stretch at tyrosine 5–aspartate 125 folds into the RNase III domain. Residue glutamate 40 participates in Mg(2+) binding. Aspartate 44 is a catalytic residue. Positions 111 and 114 each coordinate Mg(2+). Residue glutamate 114 is part of the active site. A DRBM domain is found at aspartate 153–glutamine 223.

This sequence belongs to the ribonuclease III family. In terms of assembly, homodimer. Mg(2+) is required as a cofactor.

The protein resides in the cytoplasm. It catalyses the reaction Endonucleolytic cleavage to 5'-phosphomonoester.. Digests double-stranded RNA. Involved in the processing of primary rRNA transcript to yield the immediate precursors to the large and small rRNAs (23S and 16S). Processes some mRNAs, and tRNAs when they are encoded in the rRNA operon. Processes pre-crRNA and tracrRNA of type II CRISPR loci if present in the organism. This chain is Ribonuclease 3, found in Francisella tularensis subsp. tularensis (strain WY96-3418).